The primary structure comprises 605 residues: MSNPVEQQVVCNRFRSHSCGLLNATFEQQHVRLAGWVHRKRDHGGLIFIDLRDHTGICQLVIQPEQQALFAEAEHLHNESVISVEGTVILRAENAINPRLSSGEIEVVISCMSIESNAHPLPFSVADELPTSEELRLKYRFLDLRREKLHENIIFRSRLTAAVRRYLEEKNFTEIQTPILTSSSPEGARDFLVPSRLHPGKFYALPQAPQQFKQLLMVAGFPRYFQIAPCFRDEDARADRSPGEFYQLDMEMAFIEQENLFEILEGMLEHITSTMSKKRITQVPFPRISYRDVMNRFGTDKPDLRIPLEIQDVTSLFVDSGFKVFAKNTVPGCCVKALVVKGRGNESRLFYDKAEKRAKELGSAGLAYIQFKDEGAKGPLVKFLSEDDMNALKQHLNLEQGDVVFFGAGKWEVTCKIMGGMRNYFADLFTLDKDELSFCWIVDFPMYEYNEEAKKIDFSHNPFSMPQGEMEALETKDALDILAYQYDIVCNGIELSSGAIRNHKPEIMYKAFAIAGYSREEVDQRFGHMIEAFKLGAPPHGGIAPGLDRLVMILCDEQNIREVIAFPMNQQAQDLMMSAPSEVTLAQLRELHLKVELPKKEEKKG.

E186 is an L-aspartate binding site. Residues Q210–K213 are aspartate. L-aspartate is bound by residues R232 and H460. R232 to E234 serves as a coordination point for ATP. E494 serves as a coordination point for ATP. An L-aspartate-binding site is contributed by R501. G546–R549 serves as a coordination point for ATP.

This sequence belongs to the class-II aminoacyl-tRNA synthetase family. Type 1 subfamily. As to quaternary structure, homodimer.

It is found in the cytoplasm. The enzyme catalyses tRNA(Asx) + L-aspartate + ATP = L-aspartyl-tRNA(Asx) + AMP + diphosphate. Aspartyl-tRNA synthetase with relaxed tRNA specificity since it is able to aspartylate not only its cognate tRNA(Asp) but also tRNA(Asn). Reaction proceeds in two steps: L-aspartate is first activated by ATP to form Asp-AMP and then transferred to the acceptor end of tRNA(Asp/Asn). The protein is Aspartate--tRNA(Asp/Asn) ligase of Chlorobium chlorochromatii (strain CaD3).